We begin with the raw amino-acid sequence, 197 residues long: Translation machinery-associated protein 22 (197 aa).

The SUI1 domain occupies 103–174 (IRIKRVERNK…DVREFLIKNY (72 aa)).

This sequence belongs to the DENR family. Interacts with the 40S ribosomal subunit.

It is found in the cytoplasm. This chain is Translation machinery-associated protein 22 (tma22), found in Botryotinia fuckeliana (strain B05.10) (Noble rot fungus).